The following is a 590-amino-acid chain: Oligoendopeptidase F homolog (590 aa).

Residue H381 coordinates Zn(2+). The active site involves E382. Positions 385 and 388 each coordinate Zn(2+).

It belongs to the peptidase M3B family. It depends on Zn(2+) as a cofactor.

The polypeptide is Oligoendopeptidase F homolog (pepF) (Borreliella burgdorferi (strain ATCC 35210 / DSM 4680 / CIP 102532 / B31) (Borrelia burgdorferi)).